The sequence spans 504 residues: ATP synthase subunit alpha (504 aa).

169-176 is an ATP binding site; that stretch reads GDRQTGKT.

Belongs to the ATPase alpha/beta chains family. F-type ATPases have 2 components, CF(1) - the catalytic core - and CF(0) - the membrane proton channel. CF(1) has five subunits: alpha(3), beta(3), gamma(1), delta(1), epsilon(1). CF(0) has three main subunits: a(1), b(2) and c(9-12). The alpha and beta chains form an alternating ring which encloses part of the gamma chain. CF(1) is attached to CF(0) by a central stalk formed by the gamma and epsilon chains, while a peripheral stalk is formed by the delta and b chains.

It localises to the cell membrane. It carries out the reaction ATP + H2O + 4 H(+)(in) = ADP + phosphate + 5 H(+)(out). Produces ATP from ADP in the presence of a proton gradient across the membrane. The alpha chain is a regulatory subunit. The sequence is that of ATP synthase subunit alpha from Clostridium botulinum (strain Eklund 17B / Type B).